We begin with the raw amino-acid sequence, 458 residues long: MPN domain-containing protein (458 aa).

The tract at residues 1–37 (MGSEPPSSPQVVEEGADEEDEELSGAEDADLRSSSGR) is disordered. Acidic residues predominate over residues 14-28 (EGADEEDEELSGAED). The 96-residue stretch at 42 to 137 (TRRGITLRVL…QYKTTWLHKY (96 aa)) folds into the RAMA domain. 3 residues coordinate DNA: serine 94, serine 96, and tryptophan 116. The interval 147–175 (SEGEDDEMGDDDEEEGKTTIPVEDKNKKS) is disordered. Over residues 148-161 (EGEDDEMGDDDEEE) the composition is skewed to acidic residues. An MPN domain is found at 229–364 (VAVSSNVLLL…VASTITPFWV (136 aa)). Residues histidine 306, histidine 308, and aspartate 319 each contribute to the Zn(2+) site. A JAMM motif motif is present at residues 306–319 (HSHPRGPALPSLQD).

This sequence belongs to the peptidase M67 family. Degraded following binding to N(6)-methyladenosine methylated DNA (m6A).

Probable protease. Acts as a sensor of N(6)-methyladenosine methylation on DNA (m6A): recognizes and binds m6A DNA, leading to its degradation. Binds only double strand DNA (dsDNA) in a sequence-independent manner. In Danio rerio (Zebrafish), this protein is MPN domain-containing protein.